Consider the following 615-residue polypeptide: Sodium-dependent noradrenaline transporter (615 aa).

The tract at residues 1-28 (MLLARMNPQVQPENGGAGPGSEQPPRKR) is disordered. At 1–60 (MLLARMNPQVQPENGGAGPGSEQPPRKRKEVLVVKERNGVQCLLASRDGDEQPRETWGKK) the chain is on the cytoplasmic side. A helical membrane pass occupies residues 61–86 (IDFLLSVVGFAVDLANVWRFPYLCYK). Residues Gly69, Ala71, and Val72 each coordinate Na(+). Asp73 contributes to the (R)-noradrenaline binding site. A dopamine-binding site is contributed by Asp73. Asn76 contacts Na(+). Residues Tyr85 and Lys86 each coordinate (R)-noradrenaline. Topologically, residues 87-90 (NGGG) are extracellular. The helical transmembrane segment at 91–114 (AFLIPYTLFLIIAGMPLFYMELAL) threads the bilayer. The Cytoplasmic portion of the chain corresponds to 115–133 (GQYNREGAATVWKICPFFK). A helical membrane pass occupies residues 134-164 (GVGYAVILIALYVGFYYNVIIAWSLYYLFSS). (R)-noradrenaline is bound by residues Ala143 and Gly147. Residue Ala143 participates in dopamine binding. Over 165–231 (FTPTLPWTDC…SSGIHDIGLP (67 aa)) the chain is Extracellular. A disulfide bridge connects residues Cys174 and Cys183. N-linked (GlcNAc...) asparagine glycans are attached at residues Asn182, Asn190, and Asn196. Residues 232–252 (QWQLLLCLIIVVIVLFFSLWK) form a helical membrane-spanning segment. The Cytoplasmic segment spans residues 253 to 255 (GVK). The chain crosses the membrane as a helical span at residues 256–280 (TSGKVVWITATLPYLVLFVLLVHGI). At 281–304 (TLPGASNGINAYLHIDFYRLKEAT) the chain is on the extracellular side. The helical transmembrane segment at 305-330 (VWIDAATQIFFSLGAGFGVLIAFASY) threads the bilayer. Phe315 provides a ligand contact to (R)-noradrenaline. Residue Phe315 participates in dopamine binding. Ser316 serves as a coordination point for Na(+). The Cytoplasmic segment spans residues 331–336 (NKFDNN). A helical membrane pass occupies residues 337–360 (CYRDALLTSTINCVTSFISGFAIF). Residue Asn348 coordinates Na(+). The Extracellular portion of the chain corresponds to 361 to 400 (SILGYMAHEHKVNIEDVATEGAGLVFILYPEAISTLSGST). Glu380 provides a ligand contact to (R)-noradrenaline. Glu380 contacts dopamine. A helical membrane pass occupies residues 401-426 (FWAIVFFIMLLALGIDSSMGGMEAVI). Residues Asp416 and Ser417 each coordinate Na(+). The Cytoplasmic portion of the chain corresponds to 427–441 (TGLADDFQVLKRHRK). Residues 442-462 (LFTFAVSFGTFLLALFCITKG) traverse the membrane as a helical segment. A topological domain (extracellular) is located at residue Gly463. A helical membrane pass occupies residues 464–490 (IYVLTLLDTFAAGTSILFAVLMEAIGV). The Cytoplasmic segment spans residues 491 to 520 (SWFYGVDRFSNDIQQMMGFKPGLYWRLCWK). The helical transmembrane segment at 521–543 (FVSPAFLLFVVIVSIINFKPLTY) threads the bilayer. The Extracellular segment spans residues 544 to 546 (DDY). Residues 547-567 (IFPLWANWVGWGIAGSSMVLV) form a helical membrane-spanning segment. Residues 568–615 (PAYIVYKFFSTRGSIRERLAYGITPASEHHLVAQRDIRQFQLQHWLAI) lie on the Cytoplasmic side of the membrane.

The protein belongs to the sodium:neurotransmitter symporter (SNF) (TC 2.A.22) family. SLC6A2 subfamily. In terms of assembly, monomer. Can form homodimers in the cell membrane; homodimerization is mostly mediated by cholesterol and lipids, and regulates neurotransmitter transport activity. Interacts with PRKCABP. In terms of processing, palmitoylated. Palmitoylation regulates protein levels and neurotransmitter transport.

It is found in the cell membrane. Its subcellular location is the cell projection. The protein localises to the axon. It localises to the synapse. The protein resides in the synaptosome. The catalysed reaction is (R)-noradrenaline(out) + chloride(out) + Na(+)(out) = (R)-noradrenaline(in) + chloride(in) + Na(+)(in). The enzyme catalyses dopamine(out) + chloride(out) + Na(+)(out) = dopamine(in) + chloride(in) + Na(+)(in). It catalyses the reaction dopamine(out) + chloride(out) + 2 Na(+)(out) = dopamine(in) + chloride(in) + 2 Na(+)(in). With respect to regulation, inhibited by nisoxetine, oxaprotiline and desipramin. Functionally, mediates sodium- and chloride-dependent transport of norepinephrine (also known as noradrenaline), the primary signaling neurotransmitter in the autonomic sympathetic nervous system. Is responsible for norepinephrine re-uptake and clearance from the synaptic cleft, thus playing a crucial role in norepinephrine inactivation and homeostasis. Can also mediate sodium- and chloride-dependent transport of dopamine. The sequence is that of Sodium-dependent noradrenaline transporter (SLC6A2) from Bos taurus (Bovine).